The primary structure comprises 353 residues: Chorismate synthase (353 aa).

Residue Arg-48 participates in NADP(+) binding. FMN-binding positions include Arg-128–Ser-130, Gly-280, Lys-295–Ser-299, and Arg-321.

This sequence belongs to the chorismate synthase family. As to quaternary structure, homotetramer. FMNH2 serves as cofactor.

The catalysed reaction is 5-O-(1-carboxyvinyl)-3-phosphoshikimate = chorismate + phosphate. Its pathway is metabolic intermediate biosynthesis; chorismate biosynthesis; chorismate from D-erythrose 4-phosphate and phosphoenolpyruvate: step 7/7. Catalyzes the anti-1,4-elimination of the C-3 phosphate and the C-6 proR hydrogen from 5-enolpyruvylshikimate-3-phosphate (EPSP) to yield chorismate, which is the branch point compound that serves as the starting substrate for the three terminal pathways of aromatic amino acid biosynthesis. This reaction introduces a second double bond into the aromatic ring system. This chain is Chorismate synthase, found in Nitratidesulfovibrio vulgaris (strain DSM 19637 / Miyazaki F) (Desulfovibrio vulgaris).